The primary structure comprises 226 residues: DNA mismatch repair protein MutH (226 aa).

The protein belongs to the MutH family.

It localises to the cytoplasm. Functionally, sequence-specific endonuclease that cleaves unmethylated GATC sequences. It is involved in DNA mismatch repair. The chain is DNA mismatch repair protein MutH from Actinobacillus pleuropneumoniae serotype 5b (strain L20).